Here is a 291-residue protein sequence, read N- to C-terminus: MGDYLVKALGFEGKVRAYALKATEMVNEAVRRQDTWPTASAALGRTMMAGTMMAAMLKGDAKLTVKVEGDGPIGAIIVDSQANGQTRGYVKNPHVHFELNEHGKLDVARAVGTNGSLSVVKDIGLRDHFTGSVPLVSGELGEDFTYYFVSSEQTPSSVGVGVLVNPDNSVLAAGGFVLQLMPGADDAIISEIEKRLQTIPPISKLVEAGMPPEEILAALLGDDNVKILEKMPIEFACQCSKERIARAIISLGKDEIRAMIEEDGGAETTCHFCNEVYLFSKEELETLYEEA.

Disulfide bonds link Cys237–Cys239 and Cys270–Cys273.

It belongs to the HSP33 family. In terms of processing, under oxidizing conditions two disulfide bonds are formed involving the reactive cysteines. Under reducing conditions zinc is bound to the reactive cysteines and the protein is inactive.

The protein resides in the cytoplasm. In terms of biological role, redox regulated molecular chaperone. Protects both thermally unfolding and oxidatively damaged proteins from irreversible aggregation. Plays an important role in the bacterial defense system toward oxidative stress. The polypeptide is 33 kDa chaperonin (Halalkalibacterium halodurans (strain ATCC BAA-125 / DSM 18197 / FERM 7344 / JCM 9153 / C-125) (Bacillus halodurans)).